Reading from the N-terminus, the 402-residue chain is Ubiquitin-like modifier-activating enzyme 5 (402 aa).

Residues G81, D102, K125, N148, and N182 each contribute to the ATP site. Residues C224 and C227 each coordinate Zn(2+). Residue C248 is the Glycyl thioester intermediate of the active site. Residues C301 and C306 each contribute to the Zn(2+) site. Positions 369 to 402 are disordered; sequence EAPEKSSETSEETVTTAPPDDASLEDLMAQMKSM.

It belongs to the ubiquitin-activating E1 family. UBA5 subfamily.

Its function is as follows. E1-like enzyme which activates UFM1. The chain is Ubiquitin-like modifier-activating enzyme 5 from Drosophila erecta (Fruit fly).